Reading from the N-terminus, the 578-residue chain is Proline--tRNA ligase (578 aa).

This sequence belongs to the class-II aminoacyl-tRNA synthetase family. ProS type 1 subfamily. As to quaternary structure, homodimer.

The protein localises to the cytoplasm. The catalysed reaction is tRNA(Pro) + L-proline + ATP = L-prolyl-tRNA(Pro) + AMP + diphosphate. Its function is as follows. Catalyzes the attachment of proline to tRNA(Pro) in a two-step reaction: proline is first activated by ATP to form Pro-AMP and then transferred to the acceptor end of tRNA(Pro). As ProRS can inadvertently accommodate and process non-cognate amino acids such as alanine and cysteine, to avoid such errors it has two additional distinct editing activities against alanine. One activity is designated as 'pretransfer' editing and involves the tRNA(Pro)-independent hydrolysis of activated Ala-AMP. The other activity is designated 'posttransfer' editing and involves deacylation of mischarged Ala-tRNA(Pro). The misacylated Cys-tRNA(Pro) is not edited by ProRS. In Burkholderia pseudomallei (strain K96243), this protein is Proline--tRNA ligase.